Reading from the N-terminus, the 146-residue chain is Hemoglobin subunit beta (146 aa).

Residue Val1 is modified to N-acetylvaline. Residues 2-146 (HLTADEKAAV…VATALAHKYH (145 aa)) enclose the Globin domain. The residue at position 12 (Thr12) is a Phosphothreonine. Ser44 is modified (phosphoserine). The residue at position 59 (Lys59) is an N6-acetyllysine. His63 serves as a coordination point for heme b. An N6-acetyllysine modification is found at Lys82. A heme b-binding site is contributed by His92. Position 93 is an S-nitrosocysteine (Cys93). Lys144 carries the post-translational modification N6-acetyllysine.

The protein belongs to the globin family. Heterotetramer of two alpha chains and two beta chains. In terms of tissue distribution, red blood cells.

Functionally, involved in oxygen transport from the lung to the various peripheral tissues. The polypeptide is Hemoglobin subunit beta (HBB) (Taphozous georgianus (Sharp-nosed tomb bat)).